The sequence spans 362 residues: MADEQFPAAVTALEEYHNIEQQMAEPEVASNPDKMRKLGRRHAELGAIVSAYTAYKQVKDDLEAAREMASEDPDFAEEAKRLEGELPAAEEKLRTALIPRDPDDARDTIMEIKAGTGGEEAALFAGDLLRMYMRYAEKRGWSVTVQSENTTELGGVKDVQLAIRAKGTPAPEDGVWASLKYEGGVHRVQRIPVTESQGRIQTSAAGVIVFPEADEDDDEIEIDPKDLKIDIFMSSGPGGQSVNTTYSAVRMTHIPTGITVNMQDEKSQIQNRAAALRVLKSRLLAMKHEQEAAEAADMRHSQVRSLDRSERIRTYNFPENRIVDHRTNYKAYNLDAVLDGDLQAVIDSDIQADEADRLANQK.

At Q240 the chain carries N5-methylglutamine.

This sequence belongs to the prokaryotic/mitochondrial release factor family. Methylated by PrmC. Methylation increases the termination efficiency of RF1.

It is found in the cytoplasm. Peptide chain release factor 1 directs the termination of translation in response to the peptide chain termination codons UAG and UAA. The polypeptide is Peptide chain release factor 1 (Bifidobacterium adolescentis (strain ATCC 15703 / DSM 20083 / NCTC 11814 / E194a)).